Here is a 279-residue protein sequence, read N- to C-terminus: Monoacylglycerol lipase (279 aa).

The active-site Nucleophile is the serine 110. Residues aspartate 226 and histidine 256 each act as charge relay system in the active site.

Belongs to the AB hydrolase superfamily. Monomer.

It is found in the secreted. It localises to the cell wall. The catalysed reaction is a 1-acylglycerol + H2O = glycerol + a fatty acid + H(+). It carries out the reaction Hydrolyzes glycerol monoesters of long-chain fatty acids.. It catalyses the reaction 1-butyrylglycerol + H2O = butanoate + glycerol + H(+). The enzyme catalyses 1-octanoylglycerol + H2O = octanoate + glycerol + H(+). The catalysed reaction is 1-decanoylglycerol + H2O = decanoate + glycerol + H(+). It carries out the reaction 1-dodecanoylglycerol + H2O = dodecanoate + glycerol + H(+). It catalyses the reaction 1-tetradecanoylglycerol + H2O = tetradecanoate + glycerol + H(+). The enzyme catalyses 1-(9Z-octadecenoyl)-glycerol + H2O = glycerol + (9Z)-octadecenoate + H(+). The catalysed reaction is 2-(9Z-octadecenoyl)-glycerol + H2O = glycerol + (9Z)-octadecenoate + H(+). With respect to regulation, inhibited by the serine esterase inhibitors PMSF (100%), E600 (80%) and THL (22%). Virtual screening identified a tautomer of ZINC13451138, known inhibitor for HIV-1 integrase, as a potential inhibitor. In terms of biological role, involved in the hydrolysis of exogenous host lipids during chronic infection. Catalyzes the hydrolysis of both monoacylglycerols (MAG) and diacylglycerols (DAG), with a preference for MAG. It hydrolyzes 2-MAG, 1-3-MAG and MAG with short, medium and long chain fatty acids such as 1-monobutyroyl-rac-glycerol (MC4), 1-mono-octanoyl-rac-glycerol (MC8), 1-monodecanoyl-rac-glycerol (MC10), 1-monolauroyl-rac-glycerol (MC12), 1-monomyristoyl-rac-glycerol (MC14) and 1-mono-oleyl-rac-glycerol (MC18:1). Also able to hydrolyze DAG with short (DiC6) and medium (DiC10) fatty acid chains, but not with longest fatty acid chains. Can also hydrolyze vinyl laurate (VC12), vinyl butyrate (VC4) and vinyl propionate (VC3). Its function is as follows. Induces an inflammatory response and cell apoptosis in the host cells. Increases expression of IL-6, NF-kappaB, TLR-2, TLR-6, TNF-alpha, and MyD88 in mouse alveolar macrophage RAW264.7 cells. Persistent expression induces RAW264.7 cell apoptosis in vitro. This is Monoacylglycerol lipase from Mycobacterium tuberculosis (strain ATCC 25618 / H37Rv).